Here is a 576-residue protein sequence, read N- to C-terminus: Arginine--tRNA ligase (576 aa).

Positions 122–132 (PNVAKQMHVGH) match the 'HIGH' region motif.

The protein belongs to the class-I aminoacyl-tRNA synthetase family. As to quaternary structure, monomer.

Its subcellular location is the cytoplasm. The enzyme catalyses tRNA(Arg) + L-arginine + ATP = L-arginyl-tRNA(Arg) + AMP + diphosphate. The chain is Arginine--tRNA ligase from Yersinia pseudotuberculosis serotype O:3 (strain YPIII).